A 256-amino-acid chain; its full sequence is Cell division protein DivIB (256 aa).

The Cytoplasmic segment spans residues 1 to 30; the sequence is MNNSKVIKLQDRVPKLKNQKKKNKKNVNHR. The helical transmembrane segment at 31-51 threads the bilayer; sequence LILYISILFLLVLFLIYFRSP. The Extracellular portion of the chain corresponds to 52-256; that stretch reads LSNIKKISVF…KELGAEEKKE (205 aa). The 69-residue stretch at 53-121 folds into the POTRA domain; the sequence is SNIKKISVFG…NNIDIHIEEY (69 aa).

Belongs to the FtsQ/DivIB family. DivIB subfamily.

The protein resides in the cell membrane. Cell division protein that may be involved in stabilizing or promoting the assembly of the division complex. The chain is Cell division protein DivIB from Bacillus cereus (strain ATCC 14579 / DSM 31 / CCUG 7414 / JCM 2152 / NBRC 15305 / NCIMB 9373 / NCTC 2599 / NRRL B-3711).